The sequence spans 491 residues: Conidiogenone synthase PchP450 (491 aa).

The chain crosses the membrane as a helical span at residues 2–22 (LLLWFGFFSFVCGLVIYRLQF). Residue cysteine 430 participates in heme binding.

Belongs to the cytochrome P450 family. The cofactor is heme.

It is found in the membrane. Its pathway is secondary metabolite biosynthesis; terpenoid biosynthesis. Functionally, cytochrome P450 monooxygenase; part of the gene cluster that mediates the biosynthesis of conidiogenone, a diterpene known to induce the conidiation. The bifunctional terpene synthase PrDS converts isopentenyl diphosphate (IPP) and dimethylallyl diphosphate (DMAPP) into deoxyconidiogenol. The C-terminal prenyltransferase (PT) domain of PrDS catalyzes formation of GGPP, whereas the N-terminal terpene cyclase (TC) domain catalyzes the cyclization of GGPP into deoxyconidiogenol. The cytochrome P450 monooxygenase PrP450 then catalyzes two rounds of oxidation to furnish conidiogenone. This is Conidiogenone synthase PchP450 from Penicillium rubens (strain ATCC 28089 / DSM 1075 / NRRL 1951 / Wisconsin 54-1255) (Penicillium chrysogenum).